The sequence spans 166 residues: Lipoprotein signal peptidase (166 aa).

The next 3 membrane-spanning stretches (helical) occupy residues 12–32 (WLWL…LILQ), 70–90 (WFFA…MYRA), and 102–122 (ALII…GFVV). Catalysis depends on residues Asp123 and Asp141. A helical transmembrane segment spans residues 142–162 (SAICFGAAMIVLEGFLPNAAA).

This sequence belongs to the peptidase A8 family.

The protein localises to the cell inner membrane. The catalysed reaction is Release of signal peptides from bacterial membrane prolipoproteins. Hydrolyzes -Xaa-Yaa-Zaa-|-(S,diacylglyceryl)Cys-, in which Xaa is hydrophobic (preferably Leu), and Yaa (Ala or Ser) and Zaa (Gly or Ala) have small, neutral side chains.. The protein operates within protein modification; lipoprotein biosynthesis (signal peptide cleavage). Functionally, this protein specifically catalyzes the removal of signal peptides from prolipoproteins. The chain is Lipoprotein signal peptidase from Enterobacter sp. (strain 638).